We begin with the raw amino-acid sequence, 88 residues long: UPF0335 protein WD_0557 (88 aa).

Belongs to the UPF0335 family.

The sequence is that of UPF0335 protein WD_0557 from Wolbachia pipientis wMel.